The sequence spans 352 residues: C-C chemokine receptor type 5 (352 aa).

The Extracellular portion of the chain corresponds to 1–30; that stretch reads MDYQVSSPTYDIDYYTSEPCQKINVKQIAA. Residue Tyr3 is modified to Sulfotyrosine. 2 O-linked (GalNAc...) serine glycosylation sites follow: Ser6 and Ser7. 3 positions are modified to sulfotyrosine: Tyr10, Tyr14, and Tyr15. Cystine bridges form between Cys20–Cys269 and Cys101–Cys178. Residues 31–58 form a helical membrane-spanning segment; sequence RLLPPLYSLVFIFGFVGNILVVLILINC. Over 59-68 the chain is Cytoplasmic; that stretch reads KRLKSMTDIY. Residues 69–89 form a helical membrane-spanning segment; the sequence is LLNLAISDLLFLLTVPFWAHY. At 90–102 the chain is on the extracellular side; it reads AAAQWDFGNTMCQ. The helical transmembrane segment at 103-124 threads the bilayer; sequence LLTGLYFIGFFSGIFFIILLTI. Residues 125–141 are Cytoplasmic-facing; it reads DRYLAIVHAVFALKART. Residues 142 to 166 form a helical membrane-spanning segment; sequence VTFGVVTSVITWVVAVFASLPRIIF. Over 167 to 198 the chain is Extracellular; sequence TTSHRERLHYTCSSHFPYSQYQFWKNFHTLKI. The helical transmembrane segment at 199–218 threads the bilayer; that stretch reads VILGLVLPLLVMVICYSGIL. Residues 219 to 235 lie on the Cytoplasmic side of the membrane; it reads KTLLRCRNEKKRHRAVR. A helical transmembrane segment spans residues 236 to 260; sequence LIFTIMIVYFLFWAPYNIVLLLNTF. Residues 261-277 lie on the Extracellular side of the membrane; sequence QEFFGLNNCSSSNRLDQ. The chain crosses the membrane as a helical span at residues 278 to 301; that stretch reads AMQVTETLGMTHCCINPIIYAFVG. Over 302–352 the chain is Cytoplasmic; it reads EKFRNYLLVFFQKHIAKRFCKCCSIFQQEAPERASSVYTRSTGEQEISVGL. 3 S-palmitoyl cysteine lipidation sites follow: Cys321, Cys323, and Cys324. Ser336, Ser337, Ser342, and Ser349 each carry phosphoserine; by BARK1.

It belongs to the G-protein coupled receptor 1 family. In terms of assembly, interacts with PRAF2. Efficient ligand binding to CCL3/MIP-1alpha and CCL4/MIP-1beta requires sulfation, O-glycosylation and sialic acid modifications. Glycosylation on Ser-6 is required for efficient binding of CCL4. Interacts with GRK2. Interacts with ARRB1 and ARRB2. Interacts with CNIH4. Interacts with S100A4; this interaction stimulates T-lymphocyte chemotaxis. In terms of processing, sulfated on at least 2 of the N-terminal tyrosines. Sulfation is required for efficient binding of the chemokines, CCL3 and CCL4. Post-translationally, palmitoylation in the C-terminal is important for cell surface expression. Phosphorylation on serine residues in the C-terminal is stimulated by binding CC chemokines especially by APO-RANTES. In terms of processing, O-glycosylated, but not N-glycosylated. Ser-6 appears to be the major site even if Ser-7 may be also O-glycosylated. Also sialylated glycans present which contribute to chemokine binding. Thr-16 and Ser-17 may also be glycosylated and, if so, with small moieties such as a T-antigen.

It is found in the cell membrane. In terms of biological role, receptor for a number of inflammatory CC-chemokines including CCL3/MIP-1-alpha, CCL4/MIP-1-beta and RANTES and subsequently transduces a signal by increasing the intracellular calcium ion level. May play a role in the control of granulocytic lineage proliferation or differentiation. Participates in T-lymphocyte migration to the infection site by acting as a chemotactic receptor. This is C-C chemokine receptor type 5 (CCR5) from Cercopithecus ascanius (Black-cheeked white-nosed monkey).